A 1085-amino-acid chain; its full sequence is Protein CROWDED NUCLEI 3 (1085 aa).

Coiled coils occupy residues 51 to 149 (DEAS…NDLK) and 185 to 695 (RERA…LDVL). A Glycyl lysine isopeptide (Lys-Gly) (interchain with G-Cter in ubiquitin) cross-link involves residue Lys-318. Positions 404–411 (AKREAALE) match the Nuclear localization signal motif. A Glycyl lysine isopeptide (Lys-Gly) (interchain with G-Cter in ubiquitin) cross-link involves residue Lys-661. Ser-764, Ser-787, Ser-825, and Ser-843 each carry phosphoserine. Disordered stretches follow at residues 801–997 (TVKL…GKAE) and 1020–1077 (NNTG…SIGK). The segment covering 813-825 (SLDRVSGEDHEPS) has biased composition (basic and acidic residues). Positions 854–868 (RRGRGRGRGRGKSVR) are enriched in basic residues. Positions 877 to 897 (VSRDSKPSDGETPRKRQREQT) are enriched in basic and acidic residues. A Phosphoserine modification is found at Ser-910. The span at 932–941 (VSQTPGQTRY) shows a compositional bias: polar residues. The span at 949–995 (VGTEEDKAQASKGATEKQERVNDDIRKVPSPKETRTPPEGENRENGK) shows a compositional bias: basic and acidic residues. A compositionally biased stretch (acidic residues) spans 1045–1066 (EEDDENISMIEEENEGEEEEET).

This sequence belongs to the CRWN family. Core component of the LINC complex which is composed of inner nuclear membrane SUN domain-containing proteins coupled to outer nuclear membrane WIP proteins, the nucleoskeletal CRWN/LINC proteins, and, possibly, KAKU4. As to expression, expressed at low levels in roots, leaves, flowers and flower stalks.

It is found in the nucleus membrane. The protein resides in the nucleus. Its subcellular location is the nucleoplasm. The protein localises to the cytoplasm. It localises to the nucleus lamina. Functionally, component of SUN-protein-containing multivariate complexes also called LINC complexes which link the nucleoskeleton and cytoskeleton by providing versatile outer nuclear membrane attachment sites for cytoskeletal filaments. Required for nucleus structure organization (e.g. size and shape). This chain is Protein CROWDED NUCLEI 3, found in Arabidopsis thaliana (Mouse-ear cress).